The following is an 88-amino-acid chain: Cold-regulated protein BLT14 (88 aa).

The chain is Cold-regulated protein BLT14 (BLT14) from Hordeum vulgare (Barley).